A 261-amino-acid chain; its full sequence is CD40 ligand (261 aa).

Topologically, residues 1 to 22 (MIETYSQPSPRSVAAGPPVSMK) are cytoplasmic. The chain crosses the membrane as a helical; Signal-anchor for type II membrane protein span at residues 23-43 (IFMYLLTVFLITQMIGSALFA). Topologically, residues 44-240 (AYLHRRLDKI…LQPGASVFVN (197 aa)) are extracellular. The region spanning 122 to 261 (IAAHVISEAS…GFTSFGLLKL (140 aa)) is the THD domain. A disulfide bridge connects residues Cys-178 and Cys-218. Residue Asn-240 is glycosylated (N-linked (GlcNAc...) asparagine).

The protein belongs to the tumor necrosis factor family. Homotrimer. Interacts with CD28. CD40 ligand, soluble form: Exists as either a monomer or a homotrimer. Forms a ternary complex between CD40 and integrins for CD40-CD40LG signaling. Post-translationally, the soluble form derives from the membrane form by proteolytic processing.

The protein resides in the cell membrane. Its subcellular location is the cell surface. It localises to the secreted. Cytokine that acts as a ligand to CD40/TNFRSF5. Costimulates T-cell proliferation and cytokine production. Its cross-linking on T-cells generates a costimulatory signal which enhances the production of IL4 and IL10 in conjunction with the TCR/CD3 ligation and CD28 costimulation. Induces the activation of NF-kappa-B. Induces the activation of kinases MAPK8 and PAK2 in T-cells. Mediates B-cell proliferation in the absence of co-stimulus as well as IgE production in the presence of IL4. Involved in immunoglobulin class switching. In terms of biological role, acts as a ligand for integrins, specifically ITGA5:ITGB1 and ITGAV:ITGB3; both integrins and the CD40 receptor are required for activation of CD40-CD40LG signaling, which have cell-type dependent effects, such as B-cell activation, NF-kappa-B signaling and anti-apoptotic signaling. The sequence is that of CD40 ligand (CD40LG) from Sus scrofa (Pig).